The following is an 86-amino-acid chain: Large ribosomal subunit protein bL31 (86 aa).

Residues 65–86 (YGMASSDSSEQKDKSSEEKKES) form a disordered region. Positions 73 to 86 (SEQKDKSSEEKKES) are enriched in basic and acidic residues.

Belongs to the bacterial ribosomal protein bL31 family. Type A subfamily. As to quaternary structure, part of the 50S ribosomal subunit.

Its function is as follows. Binds the 23S rRNA. This is Large ribosomal subunit protein bL31 from Prochlorococcus marinus (strain NATL2A).